Consider the following 445-residue polypeptide: Glucose-6-phosphate isomerase 2 (445 aa).

The active-site Proton donor is E285. Residues H306 and K420 contribute to the active site.

The protein belongs to the GPI family. As to quaternary structure, homodimer.

Its subcellular location is the cytoplasm. The enzyme catalyses alpha-D-glucose 6-phosphate = beta-D-fructose 6-phosphate. Its pathway is carbohydrate biosynthesis; gluconeogenesis. The protein operates within carbohydrate degradation; glycolysis; D-glyceraldehyde 3-phosphate and glycerone phosphate from D-glucose: step 2/4. Catalyzes the reversible isomerization of glucose-6-phosphate to fructose-6-phosphate. This Geobacillus stearothermophilus (Bacillus stearothermophilus) protein is Glucose-6-phosphate isomerase 2.